The following is a 1236-amino-acid chain: MRFPAKIVWLVLWTVCVAEDCKEPPPRKETEILSGSWTEQTYQEGTQATYKCRPGYRTLGSIVMMCRGGKWVSLHPSRICRKKPCAHPGDTPFGSFHLAEGTQFEYGAKVVYTCDEGYQMVGEMNFRECDTNGWTNDIPICEVVKCLPVTEPENGKIFSDALEPDQEYTYGQVVQFECNSGYMLDGPKQIHCSAGGVWSAETPKCVEIFCKTPVILNGQAVLPKATYKANERVQYRCAAGFEYGQRGDTICTKSGWTPAPTCIEITCDPPRIPNGVYRPELSKYRGQDKITYECKKGFFPEIRGTDATCTRDGWVPVPRCAWKPCSYPVIKHGRLYYSYRGYFPARVNQQFVYSCDHHFVPPSQRSWDHLTCTAEGWSPEEPCLRQCIFNYLENGHTPYREEKYLQGETVRVRCYEGYSLQNDQNTMTCTESGWSPPPRCIRVKTCSKSNIRIENGFLSESTFTYPLNKQTEYKCKPGYVTADGKTSGLITCLKNGWSAQPVCIKSCDRPVFEKARVKSDGTWFRLNDRLDYECVDGYENRDGRTTGSIVCGQDGWSDKAACYERECSIPEMDPYLNAYPRKETYKVGDVLKFSCSQGRIMVGADSVQCYHFGWSPKLPTCKVKKVKSCALPPELPNGKRKEIHKEEYAHNEVVEYACNPRFLMKGSHKIQCVDGEWTALPVCIEEERTCGNIPDLDHGDVKPSVPPYHHGDSVEFSCREAFTMIGPRFITCISGEWTQPPQCIATDELRKCKGSTLFPPEGRQAHKIEYDHNTNKSYQCRGKSEHKHSICINGEWDPKVDCNEEAKIQLCPPPPQVPNACDMTTTVNYQDGEKISILCKENYLIQDAEEIVCKDGRWQSIPRCIEKIGCSQPPQIDHGTISSSSSAEERREIHEQRLYAHGTKLSYTCEEGFEISENNVIICHMGKWSSPPQCVGLPCGLPPYVQNGVVSHKKDRYQYGEEVTYDCDEGFGTDGPASIRCLGGEWSRPQDCISTNCVNLPTFEDAVLTDREKDFYRSGEQVAFKCLSYYQLDGSNTIQCIKSKWIGRPACRDVSCGNPPQVENAIIHNQKSKYQSEERARYECIGNYDLFGEMEVVCLNGTWTEPPQCKDSQGKCGPPPPIDNGDITSLLQSVYPPGMIVEYRCQAYYELRGNKNVVCRNGEWSQLPKCLEACVISEETMRKHHIQLRWKHDKKIYSKTEDTIEFMCQHGYRQLTPKHTFRATCREGKVVYPRCG.

The N-terminal stretch at 1-18 (MRFPAKIVWLVLWTVCVA) is a signal peptide. Sushi domains lie at 19-82 (EDCK…ICRK), 83-143 (KPCA…ICEV), 144-207 (VKCL…KCVE), 208-264 (IFCK…TCIE), 265-322 (ITCD…RCAW), 325-383 (CSYP…EEPC), 385-442 (RQCI…RCIR), 444-505 (KTCS…VCIK), 507-562 (CDRP…KAAC), 565-623 (RECS…TCKV), 627-685 (KSCA…VCIE), 688-745 (RTCG…QCIA), 750-804 (RKCK…DCNE), 809-866 (QLCP…RCIE), 868-936 (IGCS…QCVG), 937-994 (LPCG…DCIS), 995-1053 (TNCV…ACRD), 1054-1111 (VSCG…QCKD), 1114-1172 (GKCG…KCLE), and 1173-1235 (ACVI…YPRC). Cystine bridges form between Cys-21/Cys-66, Cys-52/Cys-80, Cys-85/Cys-129, Cys-114/Cys-141, Cys-146/Cys-192, Cys-178/Cys-205, Cys-210/Cys-251, Cys-237/Cys-262, Cys-267/Cys-309, Cys-294/Cys-320, Cys-325/Cys-372, Cys-355/Cys-383, Cys-387/Cys-429, Cys-414/Cys-440, Cys-446/Cys-492, Cys-475/Cys-503, Cys-507/Cys-551, Cys-534/Cys-562, Cys-567/Cys-609, Cys-595/Cys-621, Cys-629/Cys-672, Cys-658/Cys-683, Cys-690/Cys-732, Cys-718/Cys-743, Cys-752/Cys-791, Cys-780/Cys-802, Cys-811/Cys-853, Cys-839/Cys-864, Cys-870/Cys-923, Cys-909/Cys-934, Cys-939/Cys-981, Cys-967/Cys-992, Cys-997/Cys-1040, Cys-1026/Cys-1051, Cys-1056/Cys-1098, Cys-1084/Cys-1109, Cys-1116/Cys-1159, Cys-1145/Cys-1170, Cys-1174/Cys-1225, and Cys-1208/Cys-1235. Sulfotyrosine occurs at positions 168 and 170. Sulfotyrosine occurs at positions 465 and 473. 3 positions are modified to sulfotyrosine: Tyr-575, Tyr-579, and Tyr-585. Asn-775 carries an N-linked (GlcNAc...) asparagine glycan. A glycan (N-linked (GlcNAc...) asparagine) is linked at Asn-1100.

In terms of assembly, homodimer. Also forms homooligomers. Interacts with complement protein C3b; this interaction inhibits complement activation. Interacts with complement protein C3d. Interacts with CR3/ITGAM; this interaction mediates adhesion of neutrophils to pathogens leading to pathogen clearance. Sulfated on tyrosine residues. In terms of tissue distribution, CFH is one of the most abundant complement components in blood where the liver is the major source of CFH protein in vivo. in addition, CFH is secreted by additional cell types including monocytes, fibroblasts, or endothelial cells.

The protein localises to the secreted. In terms of biological role, glycoprotein that plays an essential role in maintaining a well-balanced immune response by modulating complement activation. Acts as a soluble inhibitor of complement, where its binding to self markers such as glycan structures prevents complement activation and amplification on cell surfaces. Accelerates the decay of the complement alternative pathway (AP) C3 convertase C3bBb, thus preventing local formation of more C3b, the central player of the complement amplification loop. As a cofactor of the serine protease factor I, CFH also regulates proteolytic degradation of already-deposited C3b. In addition, mediates several cellular responses through interaction with specific receptors. For example, interacts with CR3/ITGAM receptor and thereby mediates the adhesion of human neutrophils to different pathogens. In turn, these pathogens are phagocytosed and destroyed. In Bos taurus (Bovine), this protein is Complement factor H (CFH).